Reading from the N-terminus, the 344-residue chain is MDVASAPGVSSHPPYYSKPICSSQSSLIRIPINKGCCFARSSNLITSLHAASRGVTRRTSGVQWCYRSIRFDPFKVNDKNSRTVTVRSDLSGAATPESTYPEPEIKLSSRLRGICFCLVAGVSAIVLIVLMITGHPFVLLFDRYRRKFHHFIAKLWASISIYPFYKTDIQGLENLPSSDTPCVYVSNHQSFLDIYTLLSLGQSYKFISKTGIFVIPVIGWAMSMMGVVPLKRMDPRSQVDCLKRCMELVKKGASVFFFPEGTRSKDGRLGPFKKGAFTIAAKTGVPVVPITLMGTGKIMPTGSEGILNHGDVRVIIHKPIYGSKADLLCDEARNKIAESMNLVS.

The transit peptide at 1–49 (MDVASAPGVSSHPPYYSKPICSSQSSLIRIPINKGCCFARSSNLITSLH) directs the protein to the chloroplast. A helical transmembrane segment spans residues 113–133 (GICFCLVAGVSAIVLIVLMIT). The HXXXXD motif motif lies at 188–193 (HQSFLD). The helical transmembrane segment at 210-230 (TGIFVIPVIGWAMSMMGVVPL) threads the bilayer.

The protein belongs to the 1-acyl-sn-glycerol-3-phosphate acyltransferase family. In terms of tissue distribution, widely expressed.

It is found in the plastid. The protein resides in the chloroplast membrane. The catalysed reaction is a fatty acyl-[ACP] + a 1-acyl-sn-glycero-3-phosphate = a 1,2-diacyl-sn-glycero-3-phosphate + holo-[ACP]. It carries out the reaction a 1-acyl-sn-glycero-3-phosphate + an acyl-CoA = a 1,2-diacyl-sn-glycero-3-phosphate + CoA. Its pathway is phospholipid metabolism; CDP-diacylglycerol biosynthesis; CDP-diacylglycerol from sn-glycerol 3-phosphate: step 2/3. Plastidial enzyme of the prokaryotic glycerol-3-phosphate pathway that converts lysophosphatidic acid (LPA) into phosphatidic acid by incorporating an acyl moiety at position sn-2. Utilizes palmitoyl-ACP (16:0-ACP) to produce phosphatidic acid containing a saturated group at position sn-2, which is characteristic of lipids synthesized by the prokaryotic pathway. In vitro, can use 16:0-CoA as acyl donor. This is 1-acyl-sn-glycerol-3-phosphate acyltransferase BAT2, chloroplastic from Brassica napus (Rape).